A 233-amino-acid chain; its full sequence is 2,3,4,5-tetrahydropyridine-2,6-dicarboxylate N-acetyltransferase (233 aa).

Belongs to the transferase hexapeptide repeat family. DapH subfamily.

It catalyses the reaction (S)-2,3,4,5-tetrahydrodipicolinate + acetyl-CoA + H2O = L-2-acetamido-6-oxoheptanedioate + CoA. The protein operates within amino-acid biosynthesis; L-lysine biosynthesis via DAP pathway; LL-2,6-diaminopimelate from (S)-tetrahydrodipicolinate (acetylase route): step 1/3. Its function is as follows. Catalyzes the transfer of an acetyl group from acetyl-CoA to tetrahydrodipicolinate. This Thermotoga sp. (strain RQ2) protein is 2,3,4,5-tetrahydropyridine-2,6-dicarboxylate N-acetyltransferase.